The primary structure comprises 245 residues: Ribosomal RNA small subunit methyltransferase G (245 aa).

S-adenosyl-L-methionine contacts are provided by residues Gly-90, Leu-95, 140 to 141 (AE), and Arg-158.

Belongs to the methyltransferase superfamily. RNA methyltransferase RsmG family.

It localises to the cytoplasm. Its function is as follows. Specifically methylates the N7 position of guanine in position 518 of 16S rRNA. In Mycobacterium leprae (strain TN), this protein is Ribosomal RNA small subunit methyltransferase G.